We begin with the raw amino-acid sequence, 166 residues long: Large ribosomal subunit protein uL10 (166 aa).

The protein belongs to the universal ribosomal protein uL10 family. In terms of assembly, part of the ribosomal stalk of the 50S ribosomal subunit. The N-terminus interacts with L11 and the large rRNA to form the base of the stalk. The C-terminus forms an elongated spine to which L12 dimers bind in a sequential fashion forming a multimeric L10(L12)X complex.

Forms part of the ribosomal stalk, playing a central role in the interaction of the ribosome with GTP-bound translation factors. The polypeptide is Large ribosomal subunit protein uL10 (Bacillus velezensis (strain DSM 23117 / BGSC 10A6 / LMG 26770 / FZB42) (Bacillus amyloliquefaciens subsp. plantarum)).